We begin with the raw amino-acid sequence, 112 residues long: Protein lin-52 homolog (112 aa).

This sequence belongs to the lin-52 family. In terms of assembly, component of the DREAM complex.

This chain is Protein lin-52 homolog (LIN52), found in Gallus gallus (Chicken).